The primary structure comprises 199 residues: Recombination protein RecR (199 aa).

The C4-type zinc-finger motif lies at 58–73 (CRICYNITDTEVCNIC). The Toprim domain maps to 81–176 (SLICVVSHPM…KVTRIAHGVP (96 aa)).

The protein belongs to the RecR family.

Its function is as follows. May play a role in DNA repair. It seems to be involved in an RecBC-independent recombinational process of DNA repair. It may act with RecF and RecO. The protein is Recombination protein RecR of Thermoanaerobacter pseudethanolicus (strain ATCC 33223 / 39E) (Clostridium thermohydrosulfuricum).